The primary structure comprises 261 residues: 5-oxoprolinase subunit A (261 aa).

This sequence belongs to the LamB/PxpA family. In terms of assembly, forms a complex composed of PxpA, PxpB and PxpC.

It carries out the reaction 5-oxo-L-proline + ATP + 2 H2O = L-glutamate + ADP + phosphate + H(+). Its function is as follows. Catalyzes the cleavage of 5-oxoproline to form L-glutamate coupled to the hydrolysis of ATP to ADP and inorganic phosphate. In Symbiobacterium thermophilum (strain DSM 24528 / JCM 14929 / IAM 14863 / T), this protein is 5-oxoprolinase subunit A.